The chain runs to 48 residues: Large ribosomal subunit protein bL33B (48 aa).

Belongs to the bacterial ribosomal protein bL33 family.

This is Large ribosomal subunit protein bL33B (rpmG 2) from Mycoplasmoides gallisepticum (strain R(low / passage 15 / clone 2)) (Mycoplasma gallisepticum).